The sequence spans 621 residues: tRNA 5-methylaminomethyl-2-thiouridine biosynthesis bifunctional protein MnmC (621 aa).

The tRNA (mnm(5)s(2)U34)-methyltransferase stretch occupies residues 1 to 222 (MKNANLSFKG…KRQMSSAVLE (222 aa)). Positions 250–621 (IGTGVAGLAT…LIRKLKKGLK (372 aa)) are FAD-dependent cmnm(5)s(2)U34 oxidoreductase.

In the N-terminal section; belongs to the methyltransferase superfamily. tRNA (mnm(5)s(2)U34)-methyltransferase family. This sequence in the C-terminal section; belongs to the DAO family. FAD is required as a cofactor.

Its subcellular location is the cytoplasm. It carries out the reaction 5-aminomethyl-2-thiouridine(34) in tRNA + S-adenosyl-L-methionine = 5-methylaminomethyl-2-thiouridine(34) in tRNA + S-adenosyl-L-homocysteine + H(+). Catalyzes the last two steps in the biosynthesis of 5-methylaminomethyl-2-thiouridine (mnm(5)s(2)U) at the wobble position (U34) in tRNA. Catalyzes the FAD-dependent demodification of cmnm(5)s(2)U34 to nm(5)s(2)U34, followed by the transfer of a methyl group from S-adenosyl-L-methionine to nm(5)s(2)U34, to form mnm(5)s(2)U34. This chain is tRNA 5-methylaminomethyl-2-thiouridine biosynthesis bifunctional protein MnmC, found in Campylobacter concisus (strain 13826).